Consider the following 93-residue polypeptide: Small ribosomal subunit protein uS19 (93 aa).

The protein belongs to the universal ribosomal protein uS19 family.

Protein S19 forms a complex with S13 that binds strongly to the 16S ribosomal RNA. This is Small ribosomal subunit protein uS19 from Helicobacter pylori (strain G27).